Reading from the N-terminus, the 186-residue chain is Probable chorismate pyruvate-lyase (186 aa).

Positions 78, 116, and 175 each coordinate substrate.

It belongs to the UbiC family.

It is found in the cytoplasm. It carries out the reaction chorismate = 4-hydroxybenzoate + pyruvate. The protein operates within cofactor biosynthesis; ubiquinone biosynthesis. Removes the pyruvyl group from chorismate, with concomitant aromatization of the ring, to provide 4-hydroxybenzoate (4HB) for the ubiquinone pathway. The protein is Probable chorismate pyruvate-lyase of Psychromonas ingrahamii (strain DSM 17664 / CCUG 51855 / 37).